The chain runs to 145 residues: MKEVVIYTDGACSKNPGPGGWCAILIYKGIKKVLKGFEENTTNNRMELKAIIEGLKALKEPCKVTVYTDSAYIVNAINQNWIGKWQKNNWKTSEKEEVKNIDLWQELLEFLKVHNVKFEKVKGHSTDTLNNMCDEIARSMIKEMR.

The RNase H type-1 domain occupies methionine 1–lysine 142. Positions 9, 47, 69, and 134 each coordinate Mg(2+).

Belongs to the RNase H family. As to quaternary structure, monomer. Mg(2+) is required as a cofactor.

It is found in the cytoplasm. The catalysed reaction is Endonucleolytic cleavage to 5'-phosphomonoester.. Functionally, endonuclease that specifically degrades the RNA of RNA-DNA hybrids. The protein is Ribonuclease H of Caldicellulosiruptor saccharolyticus (strain ATCC 43494 / DSM 8903 / Tp8T 6331).